The primary structure comprises 40 residues: Cytochrome c3 hydrogenase small chain (40 aa).

Requires Fe cation as cofactor.

The enzyme catalyses 2 Fe(III)-[cytochrome c3] + H2 = 2 Fe(II)-[cytochrome c3] + 2 H(+). In Acidithiobacillus ferrooxidans (Thiobacillus ferrooxidans), this protein is Cytochrome c3 hydrogenase small chain (hoxK).